A 490-amino-acid chain; its full sequence is Costunolide synthase (490 aa).

A helical; Signal-anchor for type II membrane protein membrane pass occupies residues 3 to 23 (PLTIVSLAVASFLLFAFWALS). N-linked (GlcNAc...) asparagine glycans are attached at residues Asn167 and Asn255. Position 432 (Cys432) interacts with heme.

Belongs to the cytochrome P450 family. The cofactor is heme.

It localises to the membrane. The catalysed reaction is germacra-1(10),4,11(13)-trien-12-oate + reduced [NADPH--hemoprotein reductase] + O2 = (+)-costunolide + oxidized [NADPH--hemoprotein reductase] + 2 H2O. It participates in secondary metabolite biosynthesis; terpenoid biosynthesis. Involved in the biosynthesis of germacrene-derived sesquiterpene lactones. Component of the parthenolide biosynthetic pathway; parthenolide and conjugates are promising anti-cancer drugs highly active against colon cancer cells. Hydroxylates germacrene A acid to 6-alpha-hydroxy-germacrne A acid, a precursor of sesquiterpene lactones that spontaneously undergoes a lactonization which yields costunolide. This Lactuca sativa (Garden lettuce) protein is Costunolide synthase.